The chain runs to 324 residues: Zinc finger C2HC domain-containing protein 1A (324 aa).

The segment at 15-44 adopts a C2HC/C3H-type 1 zinc-finger fold; the sequence is ELLPCKICGRTFFPVALKKHGPICKKTATK. Cys19, Cys22, His34, and Cys38 together coordinate Zn(2+). Residues 43–83 form a disordered region; it reads TKKRKTFDSSRQRAEGTDIPTVKPLKPRPEPPKKPSNWRRK. Over residues 48–58 the composition is skewed to basic and acidic residues; it reads TFDSSRQRAEG. A C2HC/C3H-type 2 zinc finger spans residues 118 to 147; sequence DYIQCPYCQRRFNENAADRHINFCKEQAAR. Positions 122, 125, 137, and 141 each coordinate Zn(2+). Disordered regions lie at residues 150–224 and 236–259; these read NKGK…LSPS and NVKP…LTNK. Composition is skewed to low complexity over residues 176 to 187 and 196 to 215; these read SNSPGTASSGSS and GKTV…SSLG. Ser222 carries the post-translational modification Phosphoserine. Position 243 is a phosphothreonine (Thr243). Ser291 is subject to Phosphoserine.

The protein belongs to the ZC2HC1 family. Zn(2+) serves as cofactor.

This chain is Zinc finger C2HC domain-containing protein 1A (ZC2HC1A), found in Pongo abelii (Sumatran orangutan).